Consider the following 485-residue polypeptide: Inosine-5'-monophosphate dehydrogenase (485 aa).

CBS domains lie at 99-154 (IVED…LVKE) and 156-215 (MTKD…VRDE). NAD(+) contacts are provided by residues Asp247 and 294–296 (GIG). 2 residues coordinate K(+): Gly296 and Gly298. Position 299 (Ser299) interacts with IMP. Cys301 provides a ligand contact to K(+). The Thioimidate intermediate role is filled by Cys301. IMP-binding positions include 334–336 (DGG), 357–358 (GN), and 381–385 (YRGMG). Arg397 (proton acceptor) is an active-site residue. IMP is bound at residue Glu412. 3 residues coordinate K(+): Glu466, Ser467, and His468.

The protein belongs to the IMPDH/GMPR family. In terms of assembly, homotetramer. It depends on K(+) as a cofactor.

The catalysed reaction is IMP + NAD(+) + H2O = XMP + NADH + H(+). It functions in the pathway purine metabolism; XMP biosynthesis via de novo pathway; XMP from IMP: step 1/1. Its activity is regulated as follows. Mycophenolic acid (MPA) is a non-competitive inhibitor that prevents formation of the closed enzyme conformation by binding to the same site as the amobile flap. In contrast, mizoribine monophosphate (MZP) is a competitive inhibitor that induces the closed conformation. MPA is a potent inhibitor of mammalian IMPDHs but a poor inhibitor of the bacterial enzymes. MZP is a more potent inhibitor of bacterial IMPDH. Catalyzes the conversion of inosine 5'-phosphate (IMP) to xanthosine 5'-phosphate (XMP), the first committed and rate-limiting step in the de novo synthesis of guanine nucleotides, and therefore plays an important role in the regulation of cell growth. The polypeptide is Inosine-5'-monophosphate dehydrogenase (Pyrococcus abyssi (strain GE5 / Orsay)).